The primary structure comprises 316 residues: Probable cell division protein WhiA (316 aa).

A DNA-binding region (H-T-H motif) is located at residues Thr-275 to Asn-309.

The protein belongs to the WhiA family.

Functionally, involved in cell division and chromosome segregation. The protein is Probable cell division protein WhiA of Bacillus pumilus (strain SAFR-032).